Reading from the N-terminus, the 342-residue chain is MVKVYYNGDIKENVLAGKKVAIIGYGSQGHAHALNLKESGIDVIVGVRQGKSFTQAQEDGHQVFSVREAAAQADIIMVLLPDEQQQKVYEAEIKDELTAGKSLVFAHGFNVHFHQIVPPADVDVFLVAPKGPGHLVRRTYEQGAGVPALFAIYQDVSGEAKDTALAYAKGIGGARAGVLETTFKEETETDLFGEQAVLCGGLTALVKAGFETLTEAGYQPELAYFECLHELKLIVDLMYEEGLAGMRYSISDTAQWGDFVSGPRVVDAKVKESMKQVLTDIQNGTFAKEWIVENQVNRPRFNAINASENEHQIEKVGRQLREMMPFVKQGKKKEAVVSVAQN.

Residues 2-181 form the KARI N-terminal Rossmann domain; the sequence is VKVYYNGDIK…GGARAGVLET (180 aa). Residues 25-28, R48, S52, and 82-85 contribute to the NADP(+) site; these read YGSQ and DEQQ. H107 is a catalytic residue. Residue G133 participates in NADP(+) binding. Positions 182 to 327 constitute a KARI C-terminal knotted domain; the sequence is TFKEETETDL…RQLREMMPFV (146 aa). Mg(2+) contacts are provided by D190, E194, E226, and E230. A substrate-binding site is contributed by S251.

It belongs to the ketol-acid reductoisomerase family. Requires Mg(2+) as cofactor.

It catalyses the reaction (2R)-2,3-dihydroxy-3-methylbutanoate + NADP(+) = (2S)-2-acetolactate + NADPH + H(+). The enzyme catalyses (2R,3R)-2,3-dihydroxy-3-methylpentanoate + NADP(+) = (S)-2-ethyl-2-hydroxy-3-oxobutanoate + NADPH + H(+). Its pathway is amino-acid biosynthesis; L-isoleucine biosynthesis; L-isoleucine from 2-oxobutanoate: step 2/4. It participates in amino-acid biosynthesis; L-valine biosynthesis; L-valine from pyruvate: step 2/4. In terms of biological role, involved in the biosynthesis of branched-chain amino acids (BCAA). Catalyzes an alkyl-migration followed by a ketol-acid reduction of (S)-2-acetolactate (S2AL) to yield (R)-2,3-dihydroxy-isovalerate. In the isomerase reaction, S2AL is rearranged via a Mg-dependent methyl migration to produce 3-hydroxy-3-methyl-2-ketobutyrate (HMKB). In the reductase reaction, this 2-ketoacid undergoes a metal-dependent reduction by NADPH to yield (R)-2,3-dihydroxy-isovalerate. The polypeptide is Ketol-acid reductoisomerase (NADP(+)) (Bacillus velezensis (strain DSM 23117 / BGSC 10A6 / LMG 26770 / FZB42) (Bacillus amyloliquefaciens subsp. plantarum)).